We begin with the raw amino-acid sequence, 252 residues long: 5'-nucleotidase SurE (252 aa).

Residues D8, D9, S39, and N95 each coordinate a divalent metal cation.

Belongs to the SurE nucleotidase family. A divalent metal cation is required as a cofactor.

It localises to the cytoplasm. The enzyme catalyses a ribonucleoside 5'-phosphate + H2O = a ribonucleoside + phosphate. In terms of biological role, nucleotidase that shows phosphatase activity on nucleoside 5'-monophosphates. This Clostridium botulinum (strain Kyoto / Type A2) protein is 5'-nucleotidase SurE.